Reading from the N-terminus, the 235-residue chain is 2-C-methyl-D-erythritol 4-phosphate cytidylyltransferase (235 aa).

The protein belongs to the IspD/TarI cytidylyltransferase family. IspD subfamily.

It carries out the reaction 2-C-methyl-D-erythritol 4-phosphate + CTP + H(+) = 4-CDP-2-C-methyl-D-erythritol + diphosphate. It functions in the pathway isoprenoid biosynthesis; isopentenyl diphosphate biosynthesis via DXP pathway; isopentenyl diphosphate from 1-deoxy-D-xylulose 5-phosphate: step 2/6. In terms of biological role, catalyzes the formation of 4-diphosphocytidyl-2-C-methyl-D-erythritol from CTP and 2-C-methyl-D-erythritol 4-phosphate (MEP). This is 2-C-methyl-D-erythritol 4-phosphate cytidylyltransferase from Pseudomonas putida (strain W619).